A 391-amino-acid chain; its full sequence is Probable sugar efflux transporter (391 aa).

A run of 12 helical transmembrane segments spans residues 16–36 (VFVF…PVAL), 51–71 (VGLM…PLML), 82–102 (LLFL…AWNF), 103–123 (WVLL…WSIT), 138–158 (QALG…LPLG), 170–190 (TFGV…KLLP), 210–230 (PLLV…FTTY), 247–267 (ITTL…FLFG), 277–297 (FIAF…VFKN), 300–320 (WVIF…TIAL), 338–358 (IFSG…SIVI), and 361–381 (LGLE…LFWL).

The protein belongs to the major facilitator superfamily. SotB (TC 2.A.1.2) family.

The protein resides in the cell inner membrane. Involved in the efflux of sugars. The physiological role may be the reduction of the intracellular concentration of toxic sugars or sugar metabolites. The protein is Probable sugar efflux transporter of Helicobacter pylori (strain P12).